Consider the following 607-residue polypeptide: Elongation factor 4 (607 aa).

The tr-type G domain maps to Lys11–Thr193. Residues Asp23–Thr28 and Asn140–Asp143 each bind GTP.

The protein belongs to the TRAFAC class translation factor GTPase superfamily. Classic translation factor GTPase family. LepA subfamily.

It localises to the cell membrane. It catalyses the reaction GTP + H2O = GDP + phosphate + H(+). In terms of biological role, required for accurate and efficient protein synthesis under certain stress conditions. May act as a fidelity factor of the translation reaction, by catalyzing a one-codon backward translocation of tRNAs on improperly translocated ribosomes. Back-translocation proceeds from a post-translocation (POST) complex to a pre-translocation (PRE) complex, thus giving elongation factor G a second chance to translocate the tRNAs correctly. Binds to ribosomes in a GTP-dependent manner. The chain is Elongation factor 4 from Exiguobacterium sp. (strain ATCC BAA-1283 / AT1b).